A 328-amino-acid chain; its full sequence is Tetraacyldisaccharide 4'-kinase (328 aa).

An ATP-binding site is contributed by 55–62 (TAGGNGKT).

The protein belongs to the LpxK family.

It catalyses the reaction a lipid A disaccharide + ATP = a lipid IVA + ADP + H(+). Its pathway is glycolipid biosynthesis; lipid IV(A) biosynthesis; lipid IV(A) from (3R)-3-hydroxytetradecanoyl-[acyl-carrier-protein] and UDP-N-acetyl-alpha-D-glucosamine: step 6/6. Transfers the gamma-phosphate of ATP to the 4'-position of a tetraacyldisaccharide 1-phosphate intermediate (termed DS-1-P) to form tetraacyldisaccharide 1,4'-bis-phosphate (lipid IVA). The polypeptide is Tetraacyldisaccharide 4'-kinase (Escherichia coli O139:H28 (strain E24377A / ETEC)).